The primary structure comprises 490 residues: Glutamyl-tRNA(Gln) amidotransferase subunit A (490 aa).

Catalysis depends on charge relay system residues lysine 78 and serine 158. The segment at 131–159 is disordered; it reads SNETSRFGPPINPWRRKGDNAGLTPGGSS. Catalysis depends on serine 182, which acts as the Acyl-ester intermediate.

This sequence belongs to the amidase family. GatA subfamily. In terms of assembly, heterotrimer of A, B and C subunits.

The catalysed reaction is L-glutamyl-tRNA(Gln) + L-glutamine + ATP + H2O = L-glutaminyl-tRNA(Gln) + L-glutamate + ADP + phosphate + H(+). Its function is as follows. Allows the formation of correctly charged Gln-tRNA(Gln) through the transamidation of misacylated Glu-tRNA(Gln) in organisms which lack glutaminyl-tRNA synthetase. The reaction takes place in the presence of glutamine and ATP through an activated gamma-phospho-Glu-tRNA(Gln). This Hyphomonas neptunium (strain ATCC 15444) protein is Glutamyl-tRNA(Gln) amidotransferase subunit A.